The primary structure comprises 21 residues: Peptide PGLa-R6 (21 aa).

Leucine 21 is subject to Leucine amide.

As to expression, expressed by the skin glands.

The protein resides in the secreted. In terms of biological role, antimicrobial peptide. The polypeptide is Peptide PGLa-R6 (Xenopus ruwenzoriensis (Uganda clawed frog)).